The sequence spans 328 residues: UPF0421 protein SERP1427 (328 aa).

Helical transmembrane passes span 26–46 (LFCM…IVTI), 61–81 (LPAT…FGDQ), 109–129 (AVLT…FNFF), and 132–152 (LLTA…ILPP).

This sequence belongs to the UPF0421 family.

The protein localises to the cell membrane. This Staphylococcus epidermidis (strain ATCC 35984 / DSM 28319 / BCRC 17069 / CCUG 31568 / BM 3577 / RP62A) protein is UPF0421 protein SERP1427.